The following is a 314-amino-acid chain: UDP-N-acetylenolpyruvoylglucosamine reductase (314 aa).

An FAD-binding PCMH-type domain is found at 27–192 (KIGGKARYIV…LRAVFCLKFA (166 aa)). Arginine 171 is an active-site residue. Residue serine 223 is the Proton donor of the active site. Glutamate 293 is a catalytic residue.

The protein belongs to the MurB family. Requires FAD as cofactor.

It localises to the cytoplasm. The catalysed reaction is UDP-N-acetyl-alpha-D-muramate + NADP(+) = UDP-N-acetyl-3-O-(1-carboxyvinyl)-alpha-D-glucosamine + NADPH + H(+). It participates in cell wall biogenesis; peptidoglycan biosynthesis. Its function is as follows. Cell wall formation. In Caldicellulosiruptor bescii (strain ATCC BAA-1888 / DSM 6725 / KCTC 15123 / Z-1320) (Anaerocellum thermophilum), this protein is UDP-N-acetylenolpyruvoylglucosamine reductase.